Here is a 489-residue protein sequence, read N- to C-terminus: Ulvan Lyase-PL25 (489 aa).

The first 31 residues, 1 to 31 (MNLNKTLRKNSPSGYKALLTFSIICGLMATG), serve as a signal peptide directing secretion. Residue C32 is the site of N-palmitoyl cysteine attachment. Residue C32 is the site of S-diacylglycerol cysteine attachment. N60 and N122 together coordinate substrate. H123 acts as the Proton donor in catalysis. Substrate is bound by residues K125 and H143. Y188 functions as the Proton acceptor in the catalytic mechanism. Positions 204, 208, and 246 each coordinate substrate. H208 contacts Zn(2+). Zn(2+) contacts are provided by H264, C266, and H278. Substrate is bound at residue H278.

Belongs to the polysaccharide lyase 25 family.

Its subcellular location is the cell membrane. In terms of biological role, ulvan lyase involved in ulvan degradation. Ulvan is the main polysaccharide component of the Ulvales (green seaweed) cell wall. It is composed of disaccharide building blocks comprising 3-sulfated rhamnose (Rha3S) linked to D-glucuronic acid (GlcA), L-iduronic acid (IduA), or D-xylose (Xyl). Ulvan lyase catalyzes the endolytic cleavage of the glycosidic bond between Rha3S and the uronic acids GlcA or IduA, producing oligosaccharides that have unsaturated 4-deoxy-L-threo-hex-4-enopyranosiduronic acid (deltaUA) at the non-reducing end. This results eventually in the degradation of the ulvan polysaccharide into deltaUA-Rha3S disaccharides and deltaUA-Rha3S-Xyl-Rha3S tetrasaccharides. This Pseudoalteromonas sp. (strain PLSV) protein is Ulvan Lyase-PL25.